The sequence spans 298 residues: tRNA-uridine aminocarboxypropyltransferase 2 (298 aa).

Position 1 is an N-acetylmethionine (M1). Residues 1–10 are compositionally biased toward basic and acidic residues; sequence MEPQAEERTL. The interval 1-55 is disordered; sequence MEPQAEERTLGEPAPPPSGALASPTPDEEERTEGGAPPTATPAGASGDSTSADGL. Positions 34–45 are enriched in low complexity; that stretch reads GGAPPTATPAGA. S132 bears the Phosphoserine mark. Positions 178–181 match the DXTW motif; that stretch reads DGTW.

It belongs to the TDD superfamily. DTWD2 family.

The protein localises to the nucleus. The protein resides in the cytoplasm. The catalysed reaction is a uridine in tRNA + S-adenosyl-L-methionine = a 3-[(3S)-3-amino-3-carboxypropyl]uridine in tRNA + S-methyl-5'-thioadenosine + H(+). Catalyzes the formation of 3-(3-amino-3-carboxypropyl)uridine (acp3U) at position 20a in the D-loop of several cytoplasmic tRNAs (acp3U(20a)). Also has a weak activity to form acp3U at position 20 in the D-loop of tRNAs (acp3U(20)). Involved in glycoRNA biosynthesis by mediating formation of acp3U, which acts as an attachment site for N-glycans on tRNAs. GlycoRNAs consist of RNAs modified with secretory N-glycans that are presented on the cell surface. The sequence is that of tRNA-uridine aminocarboxypropyltransferase 2 from Mus musculus (Mouse).